The following is a 188-amino-acid chain: Pyridoxal 5'-phosphate synthase subunit PdxT (188 aa).

46–48 contributes to the L-glutamine binding site; that stretch reads GES. Catalysis depends on Cys-78, which acts as the Nucleophile. L-glutamine contacts are provided by residues Arg-105 and 134 to 135; that span reads IR. Catalysis depends on charge relay system residues His-170 and Glu-172.

Belongs to the glutaminase PdxT/SNO family. In the presence of PdxS, forms a dodecamer of heterodimers. Only shows activity in the heterodimer.

It carries out the reaction aldehydo-D-ribose 5-phosphate + D-glyceraldehyde 3-phosphate + L-glutamine = pyridoxal 5'-phosphate + L-glutamate + phosphate + 3 H2O + H(+). It catalyses the reaction L-glutamine + H2O = L-glutamate + NH4(+). It functions in the pathway cofactor biosynthesis; pyridoxal 5'-phosphate biosynthesis. In terms of biological role, catalyzes the hydrolysis of glutamine to glutamate and ammonia as part of the biosynthesis of pyridoxal 5'-phosphate. The resulting ammonia molecule is channeled to the active site of PdxS. In Thermotoga petrophila (strain ATCC BAA-488 / DSM 13995 / JCM 10881 / RKU-1), this protein is Pyridoxal 5'-phosphate synthase subunit PdxT.